The sequence spans 199 residues: RNA-free ribonuclease P (199 aa).

It belongs to the HARP family.

The enzyme catalyses Endonucleolytic cleavage of RNA, removing 5'-extranucleotides from tRNA precursor.. In terms of biological role, RNA-free RNase P that catalyzes the removal of the 5'-leader sequence from pre-tRNA to produce the mature 5'-terminus. The polypeptide is RNA-free ribonuclease P (Pyrococcus furiosus (strain ATCC 43587 / DSM 3638 / JCM 8422 / Vc1)).